The primary structure comprises 843 residues: Elongation factor 2 (843 aa).

The tr-type G domain occupies 17-253; that stretch reads HNIRNMSVIA…LWGENFFDPA (237 aa). 26–33 provides a ligand contact to GTP; that stretch reads AHVDHGKS. A phosphothreonine mark is found at threonine 57 and threonine 59. Residue 158-161 coordinates GTP; the sequence is NKMD. Histidine 700 carries the post-translational modification Diphthamide.

Belongs to the TRAFAC class translation factor GTPase superfamily. Classic translation factor GTPase family. EF-G/EF-2 subfamily. Phosphorylation by EF-2 kinase completely inactivates EF-2.

The protein resides in the cytoplasm. The enzyme catalyses GTP + H2O = GDP + phosphate + H(+). Functionally, catalyzes the GTP-dependent ribosomal translocation step during translation elongation. During this step, the ribosome changes from the pre-translocational (PRE) to the post-translocational (POST) state as the newly formed A-site-bound peptidyl-tRNA and P-site-bound deacylated tRNA move to the P and E sites, respectively. Catalyzes the coordinated movement of the two tRNA molecules, the mRNA and conformational changes in the ribosome. This Beta vulgaris (Sugar beet) protein is Elongation factor 2.